The primary structure comprises 1504 residues: NAC-alpha domain-containing protein 1 (1504 aa).

10 disordered regions span residues 127 to 150 (KPGA…ASAW), 208 to 261 (DREG…HGPH), 315 to 356 (PSDW…SSWS), 396 to 436 (LPQE…STSA), 460 to 525 (DTSA…TNSQ), 539 to 565 (GLES…TPTV), 701 to 812 (VLPP…EEGV), 834 to 1064 (DLES…LPVA), 1099 to 1366 (PFQH…AMSK), and 1430 to 1467 (PSEP…GLEP). Over residues 342–354 (SSESSLSADSSSS) the composition is skewed to low complexity. A compositionally biased stretch (acidic residues) spans 398–407 (QEEEEDEEDV). 2 stretches are compositionally biased toward low complexity: residues 408–422 (AATA…ATPD) and 462–475 (SAAS…SYAG). Residues 510-525 (STPQTSEQEICLTNSQ) are compositionally biased toward polar residues. Residues 775–792 (PQESPTASSLTLQSSHPT) are compositionally biased toward polar residues. The segment covering 930–939 (PPASNQAQQN) has biased composition (low complexity). The span at 958-968 (STLSTKTSEPT) shows a compositional bias: polar residues. Positions 989–1005 (EAHDGVKTHSPQREALR) are enriched in basic and acidic residues. Position 998 is a phosphoserine (serine 998). The span at 1016–1031 (SPGQGNGPKSATSQGA) shows a compositional bias: polar residues. The segment covering 1159–1171 (PGPPDPCLCPPPQ) has biased composition (pro residues). The span at 1213–1222 (VSLSPHSTLN) shows a compositional bias: polar residues. Serine 1268 is modified (phosphoserine). The region spanning 1354 to 1419 (SRSEKKARKA…AKIEDLSQQV (66 aa)) is the NAC-A/B domain. Positions 1451 to 1464 (EEQEEEDEEVEEAG) are enriched in acidic residues.

This sequence belongs to the NAC-alpha family.

It is found in the cytoplasm. The protein localises to the nucleus. Its function is as follows. May prevent inappropriate targeting of non-secretory polypeptides to the endoplasmic reticulum (ER). May bind to nascent polypeptide chains as they emerge from the ribosome and block their interaction with the signal recognition particle (SRP), which normally targets nascent secretory peptides to the ER. May also reduce the inherent affinity of ribosomes for protein translocation sites in the ER membrane (M sites). The chain is NAC-alpha domain-containing protein 1 (Nacad) from Mus musculus (Mouse).